A 296-amino-acid chain; its full sequence is Ribosomal RNA small subunit methyltransferase A (296 aa).

6 residues coordinate S-adenosyl-L-methionine: N28, L30, G55, E77, D103, and N122.

Belongs to the class I-like SAM-binding methyltransferase superfamily. rRNA adenine N(6)-methyltransferase family. RsmA subfamily.

The protein resides in the cytoplasm. It catalyses the reaction adenosine(1518)/adenosine(1519) in 16S rRNA + 4 S-adenosyl-L-methionine = N(6)-dimethyladenosine(1518)/N(6)-dimethyladenosine(1519) in 16S rRNA + 4 S-adenosyl-L-homocysteine + 4 H(+). Functionally, specifically dimethylates two adjacent adenosines (A1518 and A1519) in the loop of a conserved hairpin near the 3'-end of 16S rRNA in the 30S particle. May play a critical role in biogenesis of 30S subunits. The chain is Ribosomal RNA small subunit methyltransferase A from Sinorhizobium fredii (strain NBRC 101917 / NGR234).